The sequence spans 329 residues: Malate dehydrogenase (329 aa).

12–18 (GAAGQIG) lines the NAD(+) pocket. Residues R95 and R101 each coordinate substrate. Residues N108, Q115, and 132-134 (VGN) contribute to the NAD(+) site. Substrate is bound by residues N134 and R165. The Proton acceptor role is filled by H190.

It belongs to the LDH/MDH superfamily. MDH type 2 family.

The catalysed reaction is (S)-malate + NAD(+) = oxaloacetate + NADH + H(+). Its function is as follows. Catalyzes the reversible oxidation of malate to oxaloacetate. In Ralstonia nicotianae (strain ATCC BAA-1114 / GMI1000) (Ralstonia solanacearum), this protein is Malate dehydrogenase.